The sequence spans 290 residues: Nucleoid occlusion protein (290 aa).

Residues 153-172 (EALAQRLGKGQSTIANKLRL) constitute a DNA-binding region (H-T-H motif).

Belongs to the ParB family.

It is found in the cytoplasm. Its subcellular location is the nucleoid. Effects nucleoid occlusion by binding relatively nonspecifically to DNA and preventing the assembly of the division machinery in the vicinity of the nucleoid, especially under conditions that disturb the cell cycle. It helps to coordinate cell division and chromosome segregation by preventing the formation of the Z ring through the nucleoid, which would cause chromosome breakage. The sequence is that of Nucleoid occlusion protein from Bacillus cereus (strain G9842).